Reading from the N-terminus, the 161-residue chain is MLSSSPTSFTHPFLSSSPPLSPISPPSRTARISPPLVSASCSYTYTEDSPRLHQIPRRLTTVPASLYDVLEVPLGATSQDIKSAYRRLARICHPDVAGTDRTSSSSADEFMKIHAAYCTLSDPEKRSVYDRRMLRRSRPLTVGTSGLGSYVGRNWETDQCW.

Over residues 1–18 the composition is skewed to low complexity; sequence MLSSSPTSFTHPFLSSSP. Residues 1-31 form a disordered region; that stretch reads MLSSSPTSFTHPFLSSSPPLSPISPPSRTAR. Residues 1 to 36 constitute a chloroplast transit peptide; that stretch reads MLSSSPTSFTHPFLSSSPPLSPISPPSRTARISPPL. The region spanning 65–133 is the J domain; that stretch reads SLYDVLEVPL…EKRSVYDRRM (69 aa).

Belongs to the DnaJ family. C/III subfamily. In terms of tissue distribution, expressed in roots, stems, leaves, flowers and developing siliques.

It localises to the plastid. It is found in the chloroplast stroma. Plays a continuous role in plant development probably in the structural organization of compartments. This chain is Chaperone protein dnaJ 11, chloroplastic (ATJ11), found in Arabidopsis thaliana (Mouse-ear cress).